The following is a 119-amino-acid chain: Large ribosomal subunit protein bL20 (119 aa).

This sequence belongs to the bacterial ribosomal protein bL20 family.

Binds directly to 23S ribosomal RNA and is necessary for the in vitro assembly process of the 50S ribosomal subunit. It is not involved in the protein synthesizing functions of that subunit. This Anoxybacillus flavithermus (strain DSM 21510 / WK1) protein is Large ribosomal subunit protein bL20.